A 290-amino-acid chain; its full sequence is 6-phospho-5-dehydro-2-deoxy-D-gluconate aldolase (290 aa).

Aspartate 85 (proton donor) is an active-site residue. Residues histidine 86 and histidine 180 each coordinate Zn(2+). Glycine 181 is a binding site for dihydroxyacetone phosphate. Histidine 208 serves as a coordination point for Zn(2+). Dihydroxyacetone phosphate contacts are provided by residues 209-211 and 230-233; these read GAS and NINT. Threonine 233 carries the phosphothreonine modification.

The protein belongs to the class II fructose-bisphosphate aldolase family. IolJ subfamily. Requires Zn(2+) as cofactor.

The enzyme catalyses 6-phospho-5-dehydro-2-deoxy-D-gluconate = 3-oxopropanoate + dihydroxyacetone phosphate. The protein operates within polyol metabolism; myo-inositol degradation into acetyl-CoA; acetyl-CoA from myo-inositol: step 6/7. Functionally, produces dihydroxyacetone phosphate (DHAP or glycerone phosphate) and malonic semialdehyde (MSA or 3-oxopropanoate) from 6-phospho-5-dehydro-2-deoxy-D-gluconate (DKGP). This is 6-phospho-5-dehydro-2-deoxy-D-gluconate aldolase (iolJ) from Bacillus velezensis (strain DSM 23117 / BGSC 10A6 / LMG 26770 / FZB42) (Bacillus amyloliquefaciens subsp. plantarum).